A 241-amino-acid chain; its full sequence is uncharacterized protein (241 aa).

It is found in the cytoplasm. It localises to the nucleus. This is an uncharacterized protein from Schizosaccharomyces pombe (strain 972 / ATCC 24843) (Fission yeast).